Here is a 72-residue protein sequence, read N- to C-terminus: MFTMKKPMLLLFFLGMISMSLCQDERGADEDDGGEMTEEEKRGAFGDLLKGVAKEAGLKLLNMAQCKLSGNC.

A signal peptide spans 1 to 22 (MFTMKKPMLLLFFLGMISMSLC). A propeptide spans 23-40 (QDERGADEDDGGEMTEEE) (removed in mature form). Residues cysteine 66 and cysteine 72 are joined by a disulfide bond.

Belongs to the frog skin active peptide (FSAP) family. Brevinin subfamily. As to expression, expressed by the skin glands.

It is found in the secreted. Its function is as follows. Antimicrobial peptide. Active against a variety of Gram-negative and Gram-positive bacterial strains. Not active against fungi. Shows very weak hemolytic activity against human erythrocytes. This is Brevinin-2SN4 from Sylvirana spinulosa (Fine-spined frog).